A 116-amino-acid chain; its full sequence is Phosphoribosyl-ATP pyrophosphatase (116 aa).

This sequence belongs to the PRA-PH family.

It localises to the cytoplasm. It carries out the reaction 1-(5-phospho-beta-D-ribosyl)-ATP + H2O = 1-(5-phospho-beta-D-ribosyl)-5'-AMP + diphosphate + H(+). Its pathway is amino-acid biosynthesis; L-histidine biosynthesis; L-histidine from 5-phospho-alpha-D-ribose 1-diphosphate: step 2/9. The polypeptide is Phosphoribosyl-ATP pyrophosphatase (Bordetella avium (strain 197N)).